Here is a 60-residue protein sequence, read N- to C-terminus: Large ribosomal subunit protein uL30 (60 aa).

Belongs to the universal ribosomal protein uL30 family. In terms of assembly, part of the 50S ribosomal subunit.

The polypeptide is Large ribosomal subunit protein uL30 (Syntrophomonas wolfei subsp. wolfei (strain DSM 2245B / Goettingen)).